A 36-amino-acid polypeptide reads, in one-letter code: Photosystem I reaction center subunit VIII (36 aa).

Residues 5 to 27 form a helical membrane-spanning segment; the sequence is FLPSILVPLVGLVFPAIAIASLF.

The protein belongs to the PsaI family.

It localises to the plastid. Its subcellular location is the chloroplast thylakoid membrane. Functionally, may help in the organization of the PsaL subunit. The protein is Photosystem I reaction center subunit VIII of Chaetosphaeridium globosum (Charophycean green alga).